The chain runs to 460 residues: Argininosuccinate lyase (460 aa).

The protein belongs to the lyase 1 family. Argininosuccinate lyase subfamily.

Its subcellular location is the cytoplasm. The catalysed reaction is 2-(N(omega)-L-arginino)succinate = fumarate + L-arginine. Its pathway is amino-acid biosynthesis; L-arginine biosynthesis; L-arginine from L-ornithine and carbamoyl phosphate: step 3/3. This Leuconostoc mesenteroides subsp. mesenteroides (strain ATCC 8293 / DSM 20343 / BCRC 11652 / CCM 1803 / JCM 6124 / NCDO 523 / NBRC 100496 / NCIMB 8023 / NCTC 12954 / NRRL B-1118 / 37Y) protein is Argininosuccinate lyase.